Consider the following 530-residue polypeptide: T-complex protein 1 subunit zeta (530 aa).

Glycine 38 contributes to the ADP binding site. Position 38 (glycine 38) interacts with ATP. Residue aspartate 89 participates in Mg(2+) binding. Residues glycine 90, threonine 91, threonine 92, serine 93, threonine 157, lysine 158, and alanine 410 each coordinate ADP. ATP contacts are provided by glycine 90, threonine 91, and threonine 92. Residues alanine 410, glycine 411, aspartate 495, and lysine 500 each contribute to the ATP site. An ADP-binding site is contributed by aspartate 495.

In terms of assembly, component of the chaperonin-containing T-complex (TRiC), a hexadecamer composed of two identical back-to-back stacked rings enclosing a protein folding chamber. Each ring is made up of eight different subunits: TCP1/CCT1, CCT2, CCT3, CCT4, CCT5, CCT6A/CCT6, CCT7, CCT8. Interacts with PACRG.

The protein localises to the cytoplasm. It carries out the reaction ATP + H2O = ADP + phosphate + H(+). Functionally, component of the chaperonin-containing T-complex (TRiC), a molecular chaperone complex that assists the folding of actin, tubulin and other proteins upon ATP hydrolysis. This is T-complex protein 1 subunit zeta from Gallus gallus (Chicken).